A 172-amino-acid polypeptide reads, in one-letter code: 3-hydroxydecanoyl-[acyl-carrier-protein] dehydratase (172 aa).

His71 is an active-site residue.

This sequence belongs to the thioester dehydratase family. FabA subfamily. Homodimer.

It is found in the cytoplasm. It catalyses the reaction a (3R)-hydroxyacyl-[ACP] = a (2E)-enoyl-[ACP] + H2O. The catalysed reaction is (3R)-hydroxydecanoyl-[ACP] = (2E)-decenoyl-[ACP] + H2O. The enzyme catalyses (2E)-decenoyl-[ACP] = (3Z)-decenoyl-[ACP]. It participates in lipid metabolism; fatty acid biosynthesis. Its function is as follows. Necessary for the introduction of cis unsaturation into fatty acids. Catalyzes the dehydration of (3R)-3-hydroxydecanoyl-ACP to E-(2)-decenoyl-ACP and then its isomerization to Z-(3)-decenoyl-ACP. Can catalyze the dehydratase reaction for beta-hydroxyacyl-ACPs with saturated chain lengths up to 16:0, being most active on intermediate chain length. This chain is 3-hydroxydecanoyl-[acyl-carrier-protein] dehydratase, found in Salmonella choleraesuis (strain SC-B67).